The following is a 140-amino-acid chain: RxLR effector protein CRE2 (140 aa).

Positions 1–24 (MRWLIWTAVSTLVMLLAMTEVSAS) are cleaved as a signal peptide. A RxLR-dEER motif is present at residues 56–72 (RSLRDKSSSLITESEER).

Belongs to the RxLR effector family.

The protein localises to the secreted. It is found in the host cell. Its function is as follows. Effector that is involved in host plant infection. Contributes to virulence during the early infection stage, by inhibiting plant defense responses induced by both PAMP-triggered immunity (PTI) and effector-triggered immunity (ETI). The polypeptide is RxLR effector protein CRE2 (Phytophthora infestans (strain T30-4) (Potato late blight agent)).